The following is a 105-amino-acid chain: Iron-sulfur cluster assembly protein CyaY (105 aa).

This sequence belongs to the frataxin family.

Its function is as follows. Involved in iron-sulfur (Fe-S) cluster assembly. May act as a regulator of Fe-S biogenesis. The chain is Iron-sulfur cluster assembly protein CyaY from Photobacterium profundum (strain SS9).